The chain runs to 537 residues: Oocyte zinc finger protein XlCOF29 (537 aa).

A disordered region spans residues Met1–Glu21. 6 C2H2-type zinc fingers span residues Phe375–His397, Phe403–His425, Phe431–His453, Tyr459–His481, Tyr487–His509, and Phe515–His537.

It belongs to the krueppel C2H2-type zinc-finger protein family.

Its subcellular location is the nucleus. May be involved in transcriptional regulation. The chain is Oocyte zinc finger protein XlCOF29 from Xenopus laevis (African clawed frog).